We begin with the raw amino-acid sequence, 407 residues long: MSSIVNGFSIQKSTKTAYDTQQPCDCWDCSAFTAVVGCGQTDGMDDWEFGETACCFTCPNKKQCAKPDPAECNIGTDSHQRDPLTRVTWNGRGPNVQCVYDVNRINTLEQIDNFKQRFGVHGDYNAVVANYCQQSSDSCITDPETGTKMTKCSRFKSDQKDGELCRGWFNQQPKAVQDTVVQNYCAVNNTPDCKCVNRAQNEVYRELKIGKVINDGCWFTPCANPQSYLLTTEVENPTCPSNFCDIIYNIIKDRDVTIDDVKNDINCVFKPDPPPQPKPQPPPDPPKPPPDPPKPDPPPPPPPKPTPPPDPPKPKPDPVPPPKPTPPPPKPTPPPPIPPQPVPILPIPPVDLKKNWIMLTFVGLVLALVIYPKSRHAIGTHTWRNAAIAVLVGLNAFGLQSYVNNHV.

Positions 265-337 (INCVFKPDPP…PPKPTPPPPI (73 aa)) are disordered. Residues 271–337 (PDPPPQPKPQ…PPKPTPPPPI (67 aa)) are compositionally biased toward pro residues. 2 helical membrane-spanning segments follow: residues 355–372 (NWIM…VIYP) and 385–403 (NAAI…QSYV).

This sequence belongs to the IIV-6 337L family.

The protein localises to the virion membrane. This chain is Putative membrane protein 047R, found in Aedes vexans (Inland floodwater mosquito).